The sequence spans 301 residues: MPTLRQPDGVLSVALSHSVVSEYRECDSLPDIDQRVAHALTMEVMLTPKPGLVDRANNGAHRDMDVALFQTSIQAISPWFRHFTDAGYQHANIPLAQLLSQVRPIGIACEQAMLSATKGVNTHKGGIFAFGLLCTAAGWLAGRGERVTQRSLCDSVAAMCHDLVRNELETCSGAATAGEHLYQRHGLTGARGEAASGFNTVCQYALPALQQAIAAGADNETALLRTLLVLMAHNPDTNVVSRGGMDGLAFVQAYAQKLLVGPLDRQALIKMDDALIARNLSPGGSADLLALTWLLYHYPAE.

The protein belongs to the CitG/MdcB family.

The catalysed reaction is 3'-dephospho-CoA + ATP = 2'-(5''-triphospho-alpha-D-ribosyl)-3'-dephospho-CoA + adenine. In Pectobacterium carotovorum subsp. carotovorum (strain PC1), this protein is Probable 2-(5''-triphosphoribosyl)-3'-dephosphocoenzyme-A synthase.